We begin with the raw amino-acid sequence, 827 residues long: Inactive rhomboid protein 2 (827 aa).

The disordered stretch occupies residues 1 to 87 (MDSTDKNGES…GFRRQASLSQ (87 aa)). The Cytoplasmic portion of the chain corresponds to 1 to 380 (MDSTDKNGES…HRPYFTYWLT (380 aa)). Phosphoserine is present on Ser60. Residues 64-77 (QRGRWQEGSSEKRP) show a composition bias toward basic and acidic residues. Residues Ser84, Ser88, Ser294, Ser296, and Ser299 each carry the phosphoserine modification. The chain crosses the membrane as a helical span at residues 381-401 (FVHIIITLLVICTYGIAPVGF). The Lumenal portion of the chain corresponds to 402-631 (AQHVTTQLVL…PDQFYRLWLS (230 aa)). The chain crosses the membrane as a helical span at residues 632-652 (LFLHAGVVHCLVSVVFQMTIL). At 653-663 (RDLEKLAGWHR) the chain is on the cytoplasmic side. A helical transmembrane segment spans residues 664 to 684 (IAIIFILSGITGNLASAIFLP). At 685 to 686 (YR) the chain is on the lumenal side. Residues 687–707 (AEVGPAGSQFGLLACLFVELF) traverse the membrane as a helical segment. Over 708–718 (QSWQLLERPWK) the chain is Cytoplasmic. A helical membrane pass occupies residues 719-739 (AFLNLSAIVLFLFICGLLPWI). Topologically, residues 740-744 (DNIAH) are lumenal. A helical transmembrane segment spans residues 745-765 (IFGFLSGLLLAFAFLPYITFG). The Cytoplasmic segment spans residues 766–773 (TSDKYRKR). The helical transmembrane segment at 774-794 (ALILVSLLVFAGLFASLVIWL) threads the bilayer. Residues 795-827 (YVYPINWPWIEYLTCFPFTSRFCEKYELDQVLH) are Lumenal-facing.

The protein belongs to the peptidase S54 family. In terms of assembly, interacts with EGF. Interacts (via cytoplasmic N-terminus) with FRMD8/iTAP; this interaction leads to mutual protein stabilization. Interacts with ADAM17/TACE. In terms of tissue distribution, detected in retina and spleen.

The protein localises to the endoplasmic reticulum membrane. It is found in the cell membrane. Regulates ADAM17 protease, a sheddase of the epidermal growth factor (EGF) receptor ligands and TNF, thereby plays a role in sleep, cell survival, proliferation, migration and inflammation. Does not exhibit any protease activity on its own. The chain is Inactive rhomboid protein 2 (RHBDF2) from Canis lupus familiaris (Dog).